The primary structure comprises 185 residues: Ribosome-recycling factor (185 aa).

The protein belongs to the RRF family.

Its subcellular location is the cytoplasm. Responsible for the release of ribosomes from messenger RNA at the termination of protein biosynthesis. May increase the efficiency of translation by recycling ribosomes from one round of translation to another. The chain is Ribosome-recycling factor from Listeria monocytogenes serotype 4a (strain HCC23).